The primary structure comprises 288 residues: 4-diphosphocytidyl-2-C-methyl-D-erythritol kinase (288 aa).

Lys-13 is an active-site residue. 97 to 107 (PMGGGIGGGSS) provides a ligand contact to ATP. Asp-139 is a catalytic residue.

It belongs to the GHMP kinase family. IspE subfamily.

The enzyme catalyses 4-CDP-2-C-methyl-D-erythritol + ATP = 4-CDP-2-C-methyl-D-erythritol 2-phosphate + ADP + H(+). It participates in isoprenoid biosynthesis; isopentenyl diphosphate biosynthesis via DXP pathway; isopentenyl diphosphate from 1-deoxy-D-xylulose 5-phosphate: step 3/6. In terms of biological role, catalyzes the phosphorylation of the position 2 hydroxy group of 4-diphosphocytidyl-2C-methyl-D-erythritol. In Saccharophagus degradans (strain 2-40 / ATCC 43961 / DSM 17024), this protein is 4-diphosphocytidyl-2-C-methyl-D-erythritol kinase.